The chain runs to 317 residues: MPIKIPDQLPAAEVLGQENIFVMTESRAVTQNIRPLRVLILNLMPKKIETEIQLMRMLSNSPLQVDVDLLRIDDRESKNTPQAHLENFYHDFEQVRGNNYDGMIITGAPLGLVEFEEVVYWPRIVEIIEWSHQHVTSTLFLCWAVQAALKALYGMEKQTHGEKLSGVYRHHRLDEHEPLLRGFDDEFVAPHSRYAAFDGDLIRAHTDLQIFAESAEAGVYLAATKDCRQVFVTGHPEYDALTLDGEYQRDLAAGLEPVIPVNYYPDNDPTRTPRASWRSHGHLLFSNWLNYYVYQLTSYRVEDIGKVFTYQQNSPSR.

The active-site Acyl-thioester intermediate is C142. The substrate site is built by K163 and S192. H235 serves as the catalytic Proton acceptor. The active site involves E237. Residue R249 participates in substrate binding.

Belongs to the MetA family.

The protein resides in the cytoplasm. It catalyses the reaction L-homoserine + succinyl-CoA = O-succinyl-L-homoserine + CoA. It functions in the pathway amino-acid biosynthesis; L-methionine biosynthesis via de novo pathway; O-succinyl-L-homoserine from L-homoserine: step 1/1. Functionally, transfers a succinyl group from succinyl-CoA to L-homoserine, forming succinyl-L-homoserine. This is Homoserine O-succinyltransferase from Aeromonas hydrophila subsp. hydrophila (strain ATCC 7966 / DSM 30187 / BCRC 13018 / CCUG 14551 / JCM 1027 / KCTC 2358 / NCIMB 9240 / NCTC 8049).